The sequence spans 765 residues: Protein transport protein sec23-2 (765 aa).

Residues cysteine 56, cysteine 60, cysteine 79, and cysteine 82 each contribute to the Zn(2+) site. Residues serine 565 and serine 566 each carry the phosphoserine modification.

Belongs to the SEC23/SEC24 family. SEC23 subfamily. As to quaternary structure, the COPII coat is composed of at least 5 proteins: the sec23/24 complex, the sec13/31 complex, and the protein sar1.

Its subcellular location is the cytoplasm. The protein localises to the cytoplasmic vesicle. It is found in the COPII-coated vesicle membrane. The protein resides in the endoplasmic reticulum membrane. It localises to the golgi apparatus membrane. Its function is as follows. Component of the coat protein complex II (COPII) which promotes the formation of transport vesicles from the endoplasmic reticulum (ER). The coat has two main functions, the physical deformation of the endoplasmic reticulum membrane into vesicles and the selection of cargo molecules. The protein is Protein transport protein sec23-2 (sec232) of Schizosaccharomyces pombe (strain 972 / ATCC 24843) (Fission yeast).